Consider the following 1002-residue polypeptide: Inversin-B (1002 aa).

ANK repeat units follow at residues 9-39, 43-72, 76-105, 109-140, 144-173, 177-209, 216-246, 250-279, 284-313, 317-346, 352-381, 385-414, 418-447, 451-480, 484-513, and 519-549; these read SLASPIQAAAVTGDKTTLLRLIASSPQVIDQ, LGRTPLMYSVLGDRRSCAEALLKHGAKVNR, SGRTALHLAAQTGNHRLLKLLLSRKADCTH, CDITALHLSTRHQDTQCLVLLLKYTPPGQVDA, RKQTALHWSAYYNRPQHVRLLVRHGSNIGI, EGKIPLHWAAGHKDPEAALTVRCLFEAAPTESL, EGRTPLHLAVGDGNQEVVRLLTSYRGCNVAP, LFRTPLHWAALLGHTPIAHLLLERNNSPNI, QGATPLHYAAQGNCPDTVRVLLSHPSVRDE, EGRTALMWAAGKGSDEVVRTMLELNPKLEV, YGGTALHAASLSGQITTVRILLENRAQADA, MKHTPLFRACEMGHREVIATLIKGGAKVHL, DGRSPLHWAALGGNANVCQILIENNINPDA, EGRTPLQCAAYGGYIGCMEVLMENKADPNI, NGRTALHWSCNNGYLDAVKLLLGYNAFPNQ, and ERYTPLDYALLGGHQEVIQFMLEHGALSIAA. The D-box 1 signature appears at 486-494; it reads RTALHWSCN. The 30-residue stretch at 551-580 folds into the IQ 1 domain; that stretch reads QDIAAFKIQAVYKGHKVRRAFQERKNLLMK. 3 stretches are compositionally biased toward basic and acidic residues: residues 586–599, 609–621, and 643–656; these read KGAAAKKREGENRQ, KQKDADSMERQNK, and AEDRKGKHREENLE. Disordered regions lie at residues 586-804 and 862-886; these read KGAA…KGRR and SAKTGQRPLTETHKPPGKACRSSSA. 2 stretches are compositionally biased toward polar residues: residues 670–680 and 687–706; these read QRITAQIQSSP and NSIQIRTSPSGTSNTQSSPL. 2 stretches are compositionally biased toward basic and acidic residues: residues 733 to 763 and 770 to 796; these read HQMESPDVVVHRIEDLIQKESRRKSHREERK and QSSDYRLHTSEKEASDSAIHREEEGKK. A D-box 2 motif is present at residues 959 to 967; it reads RKQLFQRKN. One can recognise an IQ 2 domain in the interval 966 to 995; it reads KNHAATVIQKAWRTYWVRKSSCKTRHSRSQ.

As to quaternary structure, interacts with apc2. Binds calmodulin.

The protein resides in the cytoplasm. It is found in the cytoskeleton. Its function is as follows. Required for normal renal development and establishment of left-right axis. Probably acts as a molecular switch between different Wnt signaling pathways. Inhibits the canonical Wnt pathway by targeting cytoplasmic disheveled for degradation by the ubiquitin-proteasome. This suggests that it is required in renal development to oppose the repression of terminal differentiation of tubular epithelial cells by Wnt signaling. Plays a central role in convergent extension movements in gastrulating embryos, a processus regulated by Wnt signaling. This chain is Inversin-B (invs-b), found in Xenopus laevis (African clawed frog).